The primary structure comprises 260 residues: tRNA (guanine-N(1)-)-methyltransferase (260 aa).

S-adenosyl-L-methionine-binding positions include glycine 117 and 137 to 142 (LGDFVL).

It belongs to the RNA methyltransferase TrmD family. Homodimer.

The protein localises to the cytoplasm. It carries out the reaction guanosine(37) in tRNA + S-adenosyl-L-methionine = N(1)-methylguanosine(37) in tRNA + S-adenosyl-L-homocysteine + H(+). Its function is as follows. Specifically methylates guanosine-37 in various tRNAs. The polypeptide is tRNA (guanine-N(1)-)-methyltransferase (Cupriavidus necator (strain ATCC 17699 / DSM 428 / KCTC 22496 / NCIMB 10442 / H16 / Stanier 337) (Ralstonia eutropha)).